A 186-amino-acid chain; its full sequence is MSDSNKEKKKKFADMVSKRKGDDQEDQQTGDLSEELNILKERAVQLEDHLRRAVADNENVKRIMQKQISDASDYAVTKFARDMIDSCDNLKKAMENLKDGDPIHEGIKVAHQKIVSDLKKHGIEEIDPIGNSFDSNLHQAVVEREDNEKEPGTIVEVLQTGYTIKNRLLRPAMVILSKKSADCESN.

Residues 1-22 (MSDSNKEKKKKFADMVSKRKGD) are compositionally biased toward basic and acidic residues. The disordered stretch occupies residues 1–35 (MSDSNKEKKKKFADMVSKRKGDDQEDQQTGDLSEE). A compositionally biased stretch (acidic residues) spans 23-34 (DQEDQQTGDLSE).

It belongs to the GrpE family. In terms of assembly, homodimer.

The protein localises to the cytoplasm. Its function is as follows. Participates actively in the response to hyperosmotic and heat shock by preventing the aggregation of stress-denatured proteins, in association with DnaK and GrpE. It is the nucleotide exchange factor for DnaK and may function as a thermosensor. Unfolded proteins bind initially to DnaJ; upon interaction with the DnaJ-bound protein, DnaK hydrolyzes its bound ATP, resulting in the formation of a stable complex. GrpE releases ADP from DnaK; ATP binding to DnaK triggers the release of the substrate protein, thus completing the reaction cycle. Several rounds of ATP-dependent interactions between DnaJ, DnaK and GrpE are required for fully efficient folding. In Wolbachia pipientis subsp. Culex pipiens (strain wPip), this protein is Protein GrpE.